The following is a 234-amino-acid chain: Fibroblast growth factor-binding protein 1 (234 aa).

Residues 1 to 23 (MRTHGLTLLSLLLLAVPMLLVEA) form the signal peptide. The interval 25–59 (KEGRNRRGSKASADESLALGKPGKEPRSQPTNYPI) is disordered. Disulfide bonds link Cys-71–Cys-88, Cys-97–Cys-130, and Cys-106–Cys-142. Asn-155 carries an N-linked (GlcNAc...) asparagine glycan. The segment at 169-200 (MEPSPMDTVEVTTSSSPEKTQTMATKDPQCEE) is disordered. O-linked (GalNAc...) serine glycosylation occurs at Ser-172. Residues 178 to 192 (EVTTSSSPEKTQTMA) show a composition bias toward polar residues. Residues 194-234 (KDPQCEEEDLKNQRKAALEYCGETWGSLCNFFLSMVQGSSC) are sufficient for interaction with FGF2 and FGF2-induced effects. 2 disulfides stabilise this stretch: Cys-198–Cys-234 and Cys-214–Cys-222.

Belongs to the fibroblast growth factor-binding protein family. In terms of assembly, found in a complex with FGFBP1, FGF1 and FGF2. Interacts with FGF1, FGF7, FGF10, FGF22 and HSPG2. Interacts with FGF2.

It localises to the secreted. The protein localises to the extracellular space. Its subcellular location is the cell membrane. Functionally, acts as a carrier protein that release fibroblast-binding factors (FGFs) from the extracellular matrix (EM) storage and thus enhance the mitogenic activity of FGFs. Enhances FGF2 signaling during tissue repair, angiogenesis and in tumor growth. The sequence is that of Fibroblast growth factor-binding protein 1 (FGFBP1) from Bos taurus (Bovine).